The following is a 132-amino-acid chain: Regulator of ribonuclease activity B (132 aa).

Belongs to the RraB family. Interacts with the C-terminal region of Rne.

The protein resides in the cytoplasm. In terms of biological role, globally modulates RNA abundance by binding to RNase E (Rne) and regulating its endonucleolytic activity. Can modulate Rne action in a substrate-dependent manner by altering the composition of the degradosome. This is Regulator of ribonuclease activity B from Alteromonas mediterranea (strain DSM 17117 / CIP 110805 / LMG 28347 / Deep ecotype).